The sequence spans 100 residues: Apolipoprotein C-II (100 aa).

The N-terminal stretch at 1–22 is a signal peptide; it reads MGSRFLLALFLVLLVLGYEVQG. Residues 66–74 are lipid binding; the sequence is SVDEKLRDM. The interval 78-100 is lipoprotein lipase cofactor; sequence SSAAVSTYAGIFTDQILTLLKGE.

It belongs to the apolipoprotein C2 family. Proapolipoprotein C-II is synthesized as a sialic acid containing glycoprotein which is subsequently desialylated prior to its proteolytic processing. Post-translationally, proapolipoprotein C-II, the major form found in plasma undergoes proteolytic cleavage of its N-terminal hexapeptide to generate the mature form apolipoprotein C-II, which occurs as the minor form in plasma.

It is found in the secreted. Its function is as follows. Component of chylomicrons, very low-density lipoproteins (VLDL), low-density lipoproteins (LDL), and high-density lipoproteins (HDL) in plasma. Plays an important role in lipoprotein metabolism as an activator of lipoprotein lipase. In Neotoma lepida (Desert woodrat), this protein is Apolipoprotein C-II (Apoc2).